Consider the following 182-residue polypeptide: Gas vesicle protein H1 (182 aa).

Positions 1 to 11 (MVPDENDDASD) are enriched in acidic residues. Disordered regions lie at residues 1 to 21 (MVPD…SGLL) and 65 to 106 (GRAD…GGTS). The span at 12–21 (DQSSQLSGLL) shows a compositional bias: low complexity. The segment covering 92–101 (TTEDSIHVET) has biased composition (basic and acidic residues).

The protein belongs to the gas vesicle GvpH family. GvpF to GvpM interact with each other in vitro, and may form multi-subunit complex(es). Interacts with GvpC1. Might interact with GvpA1.

It localises to the cytoplasm. The protein localises to the gas vesicle. Its function is as follows. Proteins GvpF to GvpM might be involved in nucleating gas vesicle formation. May be important for the stability of gas vesicles. Gas vesicles are hollow, gas filled proteinaceous nanostructures found in several microbial planktonic microorganisms. They allow positioning of halobacteria at the optimal depth for growth in the poorly aerated, shallow brine pools of their habitat. Functionally, expression of a 9.5 kb p-vac DNA fragment containing 2 divergently transcribed regions (gvpD-gvpE-gvpF-gvpG-gvpH-gvpI-gvpJ-gvpK-gvpL-gvpM and gvpA-gvpC-gvpN-gvpO) allows H.volcanii to produce gas vesicles. A similar region restores gas vesicle production in H.halobium without the p-vac locus, but it still has the c-vac locus. This Halobacterium salinarum (strain ATCC 700922 / JCM 11081 / NRC-1) (Halobacterium halobium) protein is Gas vesicle protein H1 (gvpH11).